Consider the following 153-residue polypeptide: Peptidoglycan-associated lipoprotein (153 aa).

A signal peptide spans 1–19 (MNKFVKSLLVAGSVAALAA). The N-palmitoyl cysteine moiety is linked to residue Cys20. Cys20 is lipidated: S-diacylglycerol cysteine. The OmpA-like domain occupies 40–153 (SVADLQQRYN…SKNRRAVLAY (114 aa)). Peptidoglycan binding stretches follow at residues 55-56 (FD) and 97-101 (YNIAL).

This sequence belongs to the Pal lipoprotein family. The Tol-Pal system is composed of five core proteins: the inner membrane proteins TolA, TolQ and TolR, the periplasmic protein TolB and the outer membrane protein Pal. They form a network linking the inner and outer membranes and the peptidoglycan layer.

It localises to the cell outer membrane. In terms of biological role, part of the Tol-Pal system, which plays a role in outer membrane invagination during cell division and is important for maintaining outer membrane integrity. The polypeptide is Peptidoglycan-associated lipoprotein (Haemophilus influenzae (strain ATCC 51907 / DSM 11121 / KW20 / Rd)).